Consider the following 340-residue polypeptide: Ferrochelatase (340 aa).

Residues His-218 and Glu-298 each contribute to the Fe cation site.

This sequence belongs to the ferrochelatase family.

The protein resides in the cytoplasm. It catalyses the reaction heme b + 2 H(+) = protoporphyrin IX + Fe(2+). It functions in the pathway porphyrin-containing compound metabolism; protoheme biosynthesis; protoheme from protoporphyrin-IX: step 1/1. In terms of biological role, catalyzes the ferrous insertion into protoporphyrin IX. This Wolbachia sp. subsp. Brugia malayi (strain TRS) protein is Ferrochelatase.